A 468-amino-acid polypeptide reads, in one-letter code: UDP-N-acetylmuramate--L-alanine ligase (468 aa).

ATP is bound at residue 114–120 (GTHGKTT).

The protein belongs to the MurCDEF family.

Its subcellular location is the cytoplasm. The catalysed reaction is UDP-N-acetyl-alpha-D-muramate + L-alanine + ATP = UDP-N-acetyl-alpha-D-muramoyl-L-alanine + ADP + phosphate + H(+). The protein operates within cell wall biogenesis; peptidoglycan biosynthesis. Functionally, cell wall formation. This is UDP-N-acetylmuramate--L-alanine ligase from Methylobacterium radiotolerans (strain ATCC 27329 / DSM 1819 / JCM 2831 / NBRC 15690 / NCIMB 10815 / 0-1).